The sequence spans 568 residues: Proline--tRNA ligase (568 aa).

This sequence belongs to the class-II aminoacyl-tRNA synthetase family. ProS type 1 subfamily. As to quaternary structure, homodimer.

The protein localises to the cytoplasm. The enzyme catalyses tRNA(Pro) + L-proline + ATP = L-prolyl-tRNA(Pro) + AMP + diphosphate. Functionally, catalyzes the attachment of proline to tRNA(Pro) in a two-step reaction: proline is first activated by ATP to form Pro-AMP and then transferred to the acceptor end of tRNA(Pro). As ProRS can inadvertently accommodate and process non-cognate amino acids such as alanine and cysteine, to avoid such errors it has two additional distinct editing activities against alanine. One activity is designated as 'pretransfer' editing and involves the tRNA(Pro)-independent hydrolysis of activated Ala-AMP. The other activity is designated 'posttransfer' editing and involves deacylation of mischarged Ala-tRNA(Pro). The misacylated Cys-tRNA(Pro) is not edited by ProRS. This chain is Proline--tRNA ligase, found in Aliarcobacter butzleri (strain RM4018) (Arcobacter butzleri).